Reading from the N-terminus, the 306-residue chain is UDP-N-acetylenolpyruvoylglucosamine reductase (306 aa).

An FAD-binding PCMH-type domain is found at 34–198 (VGGPADLLIT…LEVTFKLHNS (165 aa)). Arg-177 is a catalytic residue. The Proton donor role is filled by Ser-227. The active site involves Glu-297.

Belongs to the MurB family. FAD serves as cofactor.

It is found in the cytoplasm. The enzyme catalyses UDP-N-acetyl-alpha-D-muramate + NADP(+) = UDP-N-acetyl-3-O-(1-carboxyvinyl)-alpha-D-glucosamine + NADPH + H(+). The protein operates within cell wall biogenesis; peptidoglycan biosynthesis. Cell wall formation. The chain is UDP-N-acetylenolpyruvoylglucosamine reductase from Clostridium botulinum (strain Langeland / NCTC 10281 / Type F).